Consider the following 342-residue polypeptide: Eukaryotic translation initiation factor 3 subunit F (342 aa).

Residues 30 to 166 (VAIQPQAVFS…SRTYISAPIG (137 aa)) form the MPN domain. The disordered stretch occupies residues 310 to 342 (TDALAGDGQKDGGDRKQGGDRRNKGRQQRTQEA). The segment covering 317–331 (GQKDGGDRKQGGDRR) has biased composition (basic and acidic residues).

The protein belongs to the eIF-3 subunit F family. Component of the eukaryotic translation initiation factor 3 (eIF-3) complex.

It localises to the cytoplasm. In terms of biological role, component of the eukaryotic translation initiation factor 3 (eIF-3) complex, which is involved in protein synthesis of a specialized repertoire of mRNAs and, together with other initiation factors, stimulates binding of mRNA and methionyl-tRNAi to the 40S ribosome. The eIF-3 complex specifically targets and initiates translation of a subset of mRNAs involved in cell proliferation. This chain is Eukaryotic translation initiation factor 3 subunit F, found in Phaeosphaeria nodorum (strain SN15 / ATCC MYA-4574 / FGSC 10173) (Glume blotch fungus).